The primary structure comprises 200 residues: Small ribosomal subunit protein uS2 (200 aa).

The protein belongs to the universal ribosomal protein uS2 family.

This Picrophilus torridus (strain ATCC 700027 / DSM 9790 / JCM 10055 / NBRC 100828 / KAW 2/3) protein is Small ribosomal subunit protein uS2.